The primary structure comprises 222 residues: C-reactive protein (222 aa).

Residues 1 to 19 form the signal peptide; it reads MEKLSLCLLVIISLSNAFA. Glutamine 20 bears the Pyrrolidone carboxylic acid mark. The Pentraxin (PTX) domain occupies 24 to 222; the sequence is IGKAFVFPKE…EVYVKPQLWP (199 aa). Cysteine 55 and cysteine 113 are disulfide-bonded. Ca(2+) contacts are provided by asparagine 78, glutamate 154, glutamine 155, aspartate 156, and glutamine 166.

Belongs to the pentraxin family. As to quaternary structure, homopentamer. Pentraxin (or pentaxin) have a discoid arrangement of 5 non-covalently bound subunits. Interacts with FCN1; may regulate monocyte activation by FCN1. The cofactor is Ca(2+). In terms of tissue distribution, found in plasma.

Its subcellular location is the secreted. Displays several functions associated with host defense: it promotes agglutination, bacterial capsular swelling, phagocytosis and complement fixation through its calcium-dependent binding to phosphorylcholine. Can interact with DNA and histones and may scavenge nuclear material released from damaged circulating cells. The chain is C-reactive protein (CRP) from Sus scrofa (Pig).